Reading from the N-terminus, the 703-residue chain is Hyperosmolality-gated Ca2+ permeable channel 2.3 (703 aa).

Residues 1-3 (MLL) are Extracellular-facing. The helical transmembrane segment at 4 to 26 (SALLTSVGINLGLCFLFFTLYSI) threads the bilayer. At 27–81 (LRKQPSNVTVYGPRLVKKDGKSQQSNEFNLERLLPTAGWVKRALEPTNDEILSNL) the chain is on the cytoplasmic side. A helical membrane pass occupies residues 82–115 (GLDALVFIRVFVFSIRVFSFASVVGIFILLPVNY). Residues 116–143 (MGTEFEEFFDLPKKSMDNFSISNVNDGS) lie on the Extracellular side of the membrane. Residues 144 to 165 (NKLWIHFCAIYIFTAVVCSLLY) form a helical membrane-spanning segment. Over 166 to 355 (YEHKYILTKR…TASFVRRWIS (190 aa)) the chain is Cytoplasmic. The stretch at 228-300 (RTDKLKVLMN…LKQSLLAGEE (73 aa)) forms a coiled coil. A helical transmembrane segment spans residues 356-382 (NVVVLVAFVALLILYIVPVVLVQGLAN). Topologically, residues 383 to 410 (LHQLETWFPFLKGILNMKIVSQVITGYL) are extracellular. The chain crosses the membrane as a helical span at residues 411-432 (PSLIFQLFLLIVPPIMLLLSSM). Residues 433 to 436 (QGFI) are Cytoplasmic-facing. Residues 437–463 (SHSQIEKSACIKLLIFTVWNSFFANVL) traverse the membrane as a helical segment. Topologically, residues 464–489 (SGSALYRVNVFLEPKTIPRVLAAAVP) are extracellular. The helical transmembrane segment at 490 to 512 (AQASFFVSYVVTSGWTGLSSEIL) threads the bilayer. Over 513–540 (RLVPLLWSFITKLFGKEDDKEFEVPSTP) the chain is Cytoplasmic. The chain crosses the membrane as a helical span at residues 541 to 561 (FCQEIPRILFFGLLGITYFFL). Position 562 (Ser-562) is a topological domain, extracellular. Residues 563–586 (PLILPFLLVYYCLGYIIYRNQLLN) form a helical membrane-spanning segment. The Cytoplasmic segment spans residues 587–598 (VYAAKYETGGKF). A helical transmembrane segment spans residues 599–623 (WPIVHSYTIFSLVLMHIIAVGLFGL). The Extracellular portion of the chain corresponds to 624 to 626 (KEL). The chain crosses the membrane as a helical span at residues 627–655 (PVASSLTIPLPVLTVLFSIYCQRRFLPNF). Over 656–703 (KSYPTQCLVNKDKADEREQNMSEFYSELVVAYRDPALSASQDSRDISP) the chain is Cytoplasmic.

It belongs to the CSC1 (TC 1.A.17) family. As to quaternary structure, homodimer.

It is found in the membrane. Functionally, acts as an osmosensitive calcium-permeable cation channel. The protein is Hyperosmolality-gated Ca2+ permeable channel 2.3 of Arabidopsis thaliana (Mouse-ear cress).